A 151-amino-acid chain; its full sequence is Deoxyuridine 5'-triphosphate nucleotidohydrolase (151 aa).

Substrate is bound by residues 70–72, Asn-83, 87–89, and Met-97; these read RSG and LID.

The protein belongs to the dUTPase family. Mg(2+) serves as cofactor.

The enzyme catalyses dUTP + H2O = dUMP + diphosphate + H(+). It functions in the pathway pyrimidine metabolism; dUMP biosynthesis; dUMP from dCTP (dUTP route): step 2/2. Its function is as follows. This enzyme is involved in nucleotide metabolism: it produces dUMP, the immediate precursor of thymidine nucleotides and it decreases the intracellular concentration of dUTP so that uracil cannot be incorporated into DNA. The protein is Deoxyuridine 5'-triphosphate nucleotidohydrolase of Haemophilus influenzae (strain 86-028NP).